A 145-amino-acid chain; its full sequence is D-aminoacyl-tRNA deacylase (145 aa).

The Gly-cisPro motif, important for rejection of L-amino acids signature appears at 137 to 138 (GP).

It belongs to the DTD family. As to quaternary structure, homodimer.

Its subcellular location is the cytoplasm. It catalyses the reaction glycyl-tRNA(Ala) + H2O = tRNA(Ala) + glycine + H(+). The catalysed reaction is a D-aminoacyl-tRNA + H2O = a tRNA + a D-alpha-amino acid + H(+). Functionally, an aminoacyl-tRNA editing enzyme that deacylates mischarged D-aminoacyl-tRNAs. Also deacylates mischarged glycyl-tRNA(Ala), protecting cells against glycine mischarging by AlaRS. Acts via tRNA-based rather than protein-based catalysis; rejects L-amino acids rather than detecting D-amino acids in the active site. By recycling D-aminoacyl-tRNA to D-amino acids and free tRNA molecules, this enzyme counteracts the toxicity associated with the formation of D-aminoacyl-tRNA entities in vivo and helps enforce protein L-homochirality. The sequence is that of D-aminoacyl-tRNA deacylase from Pseudomonas fluorescens (strain SBW25).